The primary structure comprises 189 residues: uncharacterized protein (189 aa).

Basic and acidic residues predominate over residues 105–115 (EKLEKEEESKT). The segment at 105-189 (EKLEKEEESK…TDDEKTEVST (85 aa)) is disordered. Positions 116–136 (AKKRAKRLRQKAAAKKRKLTK) are enriched in basic residues. The segment covering 141-151 (SDESSSDDSDS) has biased composition (acidic residues). The span at 161–177 (SEGKQNTEVEDKDKVEK) shows a compositional bias: basic and acidic residues. The span at 178–189 (EETDDEKTEVST) shows a compositional bias: acidic residues.

This is an uncharacterized protein from Caenorhabditis elegans.